An 876-amino-acid polypeptide reads, in one-letter code: Exonuclease mut-7 homolog (876 aa).

One can recognise a 3'-5' exonuclease domain in the interval G517 to A571. Disordered regions lie at residues D578 to A607 and S751 to E781.

Belongs to the mut-7 family. It depends on Mg(2+) as a cofactor.

Functionally, possesses 3'-5' exoribonuclease activity. Required for 3'-end trimming of AGO1-bound miRNAs. This is Exonuclease mut-7 homolog (EXD3) from Homo sapiens (Human).